Here is a 1068-residue protein sequence, read N- to C-terminus: Putative protein TIC 214 N-terminal part (1068 aa).

6 consecutive transmembrane segments (helical) span residues 11 to 31, 68 to 88, 92 to 112, 131 to 151, 166 to 186, and 213 to 233; these read VLWV…LFGI, ITGQ…VLLI, LLTL…KDLI, IFFD…SPVL, FIFL…FVSL, and FSII…VPFI.

Belongs to the TIC214 family. In terms of assembly, part of the Tic complex.

The protein resides in the plastid. It is found in the chloroplast inner membrane. Its function is as follows. Involved in protein precursor import into chloroplasts. May be part of an intermediate translocation complex acting as a protein-conducting channel at the inner envelope. This is Putative protein TIC 214 N-terminal part from Marchantia polymorpha (Common liverwort).